We begin with the raw amino-acid sequence, 124 residues long: Protein TAR1 (124 aa).

A disordered region spans residues 80 to 124; the sequence is KNRTPRHTGFSPSMTSCSKEHRQGTAPKLPSPNYNSGTEGTRFQI. Residues 111–124 show a composition bias toward polar residues; sequence PNYNSGTEGTRFQI.

The protein localises to the mitochondrion. Functionally, may be involved in mtDNA stability or mitochondrial gene expression regulation at the post-transcriptional level. The protein is Protein TAR1 (TAR1) of Saccharomyces cerevisiae (strain ATCC 204508 / S288c) (Baker's yeast).